Consider the following 88-residue polypeptide: Putative membrane protein insertion efficiency factor (88 aa).

Positions Leu-67 to Lys-88 are disordered. Residues Ser-79 to Lys-88 show a composition bias toward basic and acidic residues.

Belongs to the UPF0161 family.

Its subcellular location is the cell inner membrane. Its function is as follows. Could be involved in insertion of integral membrane proteins into the membrane. This Actinobacillus succinogenes (strain ATCC 55618 / DSM 22257 / CCUG 43843 / 130Z) protein is Putative membrane protein insertion efficiency factor.